The sequence spans 177 residues: MIRINSRGLTVSTRRFQTLSKIGSTLKTKEDIRNALNSPVWSLKELISSNEKDMKSVEVSAKTINKVLKLSAFDTNITAEQEKSLVSALSAQMVFIKHLYENDEKSDSVVEENDTHFRLIASDHNPGEPLTLKQLLAQIEELPEKVDPAKGETQGSFNVANMNPRNRPFATIRSKQG.

A mitochondrion-targeting transit peptide spans 1 to 16; sequence MIRINSRGLTVSTRRF. The segment at 148–177 is disordered; the sequence is PAKGETQGSFNVANMNPRNRPFATIRSKQG. Positions 153–164 are enriched in polar residues; that stretch reads TQGSFNVANMNP.

It belongs to the GatF family. Subunit of the heterotrimeric GatFAB amidotransferase (AdT) complex, composed of A, B and F subunits.

The protein localises to the mitochondrion inner membrane. It catalyses the reaction L-glutamyl-tRNA(Gln) + L-glutamine + ATP + H2O = L-glutaminyl-tRNA(Gln) + L-glutamate + ADP + phosphate + H(+). Allows the formation of correctly charged Gln-tRNA(Gln) through the transamidation of misacylated Glu-tRNA(Gln) in the mitochondria. The reaction takes place in the presence of glutamine and ATP through an activated gamma-phospho-Glu-tRNA(Gln). Required for proper protein synthesis within the mitochondrion. In Scheffersomyces stipitis (strain ATCC 58785 / CBS 6054 / NBRC 10063 / NRRL Y-11545) (Yeast), this protein is Glutamyl-tRNA(Gln) amidotransferase subunit F, mitochondrial.